The chain runs to 1449 residues: ABC transporter G family member 21 (1449 aa).

The span at 1 to 10 (MEEYELREIA) shows a compositional bias: basic and acidic residues. Residues 1–49 (MEEYELREIALQEGGSNLDINTPPNYDNPVGDGSSPPDSPDIQKSENQF) form a disordered region. A compositionally biased stretch (polar residues) spans 14–25 (GGSNLDINTPPN). Residues 130-383 (ISFFNLFKPS…FIDLGFDCEP (254 aa)) enclose the ABC transporter 1 domain. An ABC transmembrane type-2 1 domain is found at 488 to 731 (WGDKFSLISR…ILSVEGKDYL (244 aa)). 5 helical membrane passes run 519 to 539 (IPGLFTRGGAIFSAILFNAFL), 577 to 597 (IPLTMIQVFLFSIVVYFMFGL), 602 to 622 (GKFFIFCFTLVGATLATTNLF), 634 to 654 (ISQNVMNVILIFMITYCGYTI), and 747 to 767 (FITYLWWVLFTAMNMFAMEYF). The 245-residue stretch at 818-1062 (FTWQNINYTV…LTSYFERYGV (245 aa)) folds into the ABC transporter 2 domain. 854 to 861 (GSSGAGKT) provides a ligand contact to ATP. Residues 1152-1386 (FYTYGSFIQS…PISEPLTGYV (235 aa)) form the ABC transmembrane type-2 2 domain. 6 helical membrane passes run 1155–1175 (YGSFIQSALAGLIIGFTFWSL), 1188–1208 (FIFEALILGILLIFVVLPQFI), 1228–1248 (FAISIVVVELPFITVSGTIFF), 1266–1286 (FYFWFIFILFLYFCVSFGQAV), 1296–1316 (AHTLIPLLIVFLFLFCGVMVI), and 1423–1443 (LALIICFWIFNTLMVITFVYI).

Belongs to the ABC transporter superfamily. ABCG family. PDR (TC 3.A.1.205) subfamily.

It localises to the membrane. The protein is ABC transporter G family member 21 (abcG21) of Dictyostelium discoideum (Social amoeba).